The following is a 499-amino-acid chain: Pentatricopeptide repeat-containing protein At5g61800 (499 aa).

PPR repeat units lie at residues 78–113, 114–150, 151–181, 182–212, 213–247, 248–282, 283–313, 314–348, 349–379, and 385–419; these read STFCFNTIIRICTLHEPSSLSSKRFFVEMRRRSVPP, DFHTFPFVFKACAAKKNGDLTLVKTLHCQALRFGLLS, DLFTLNTLIRVYSLIAPIDSALQLFDENPQR, DVVTYNVLIDGLVKAREIVRARELFDSMPLR, DLVSWNSLISGYAQMNHCREAIKLFDEMVALGLKP, DNVAIVSTLSACAQSGDWQKGKAIHDYTKRKRLFI, DSFLATGLVDFYAKCGFIDTAMEIFELCSDK, TLFTWNAMITGLAMHGNGELTVDYFRKMVSSGIKP, DGVTFISVLVGCSHSGLVDEARNLFDQMRSL, and EMKHYGCMADLLGRAGLIEEAAEMIEQMPKDGGNR. Residues 424–499 form a type E motif region; that stretch reads AWSGLLGGCR…KNVGFSKVLS (76 aa).

The protein belongs to the PPR family. PCMP-E subfamily.

The sequence is that of Pentatricopeptide repeat-containing protein At5g61800 (PCMP-E8) from Arabidopsis thaliana (Mouse-ear cress).